A 219-amino-acid polypeptide reads, in one-letter code: Thiamine-phosphate synthase (219 aa).

4-amino-2-methyl-5-(diphosphooxymethyl)pyrimidine is bound by residues 44–48 and asparagine 79; that span reads QFREK. Residues aspartate 80 and aspartate 99 each coordinate Mg(2+). Serine 117 is a 4-amino-2-methyl-5-(diphosphooxymethyl)pyrimidine binding site. 143 to 145 contributes to the 2-[(2R,5Z)-2-carboxy-4-methylthiazol-5(2H)-ylidene]ethyl phosphate binding site; that stretch reads TST. Residue lysine 146 coordinates 4-amino-2-methyl-5-(diphosphooxymethyl)pyrimidine. 2-[(2R,5Z)-2-carboxy-4-methylthiazol-5(2H)-ylidene]ethyl phosphate contacts are provided by residues glycine 175 and 195 to 196; that span reads IS.

The protein belongs to the thiamine-phosphate synthase family. Mg(2+) is required as a cofactor.

It catalyses the reaction 2-[(2R,5Z)-2-carboxy-4-methylthiazol-5(2H)-ylidene]ethyl phosphate + 4-amino-2-methyl-5-(diphosphooxymethyl)pyrimidine + 2 H(+) = thiamine phosphate + CO2 + diphosphate. The enzyme catalyses 2-(2-carboxy-4-methylthiazol-5-yl)ethyl phosphate + 4-amino-2-methyl-5-(diphosphooxymethyl)pyrimidine + 2 H(+) = thiamine phosphate + CO2 + diphosphate. It carries out the reaction 4-methyl-5-(2-phosphooxyethyl)-thiazole + 4-amino-2-methyl-5-(diphosphooxymethyl)pyrimidine + H(+) = thiamine phosphate + diphosphate. Its pathway is cofactor biosynthesis; thiamine diphosphate biosynthesis; thiamine phosphate from 4-amino-2-methyl-5-diphosphomethylpyrimidine and 4-methyl-5-(2-phosphoethyl)-thiazole: step 1/1. Condenses 4-methyl-5-(beta-hydroxyethyl)thiazole monophosphate (THZ-P) and 2-methyl-4-amino-5-hydroxymethyl pyrimidine pyrophosphate (HMP-PP) to form thiamine monophosphate (TMP). The chain is Thiamine-phosphate synthase from Bacillus thuringiensis (strain Al Hakam).